The primary structure comprises 393 residues: S-adenosylmethionine synthase 3 (393 aa).

Residue E9 participates in Mg(2+) binding. Position 15 (H15) interacts with ATP. Position 43 (E43) interacts with K(+). L-methionine-binding residues include E56 and Q99. Residues 167–169, 235–238, D246, 252–253, A269, K273, and K277 contribute to the ATP site; these read NGK, SGRF, and RK. D246 is an L-methionine binding site. K277 lines the L-methionine pocket.

The protein belongs to the AdoMet synthase family. In terms of assembly, homotetramer. Mn(2+) serves as cofactor. Requires Mg(2+) as cofactor. The cofactor is Co(2+). K(+) is required as a cofactor. Mostly expressed in flowers, seedpods and roots, and, to a lower extent, in stems and leaves.

Its subcellular location is the cytoplasm. It carries out the reaction L-methionine + ATP + H2O = S-adenosyl-L-methionine + phosphate + diphosphate. The protein operates within amino-acid biosynthesis; S-adenosyl-L-methionine biosynthesis; S-adenosyl-L-methionine from L-methionine: step 1/1. Functionally, catalyzes the formation of S-adenosylmethionine from methionine and ATP. The reaction comprises two steps that are both catalyzed by the same enzyme: formation of S-adenosylmethionine (AdoMet) and triphosphate, and subsequent hydrolysis of the triphosphate. The protein is S-adenosylmethionine synthase 3 (MSAMS3) of Brassica juncea (Indian mustard).